We begin with the raw amino-acid sequence, 258 residues long: Phosphatidylglycerol--prolipoprotein diacylglyceryl transferase (258 aa).

7 helical membrane-spanning segments follow: residues 9-29 (ILIQ…ATGF), 53-73 (LLTY…TLIY), 90-110 (EGGL…WLFV), 117-139 (KFLW…IRLG), 169-189 (PVQL…LMLF), 198-218 (GFLF…IEYF), and 230-250 (LISV…VLML). Arg137 is a binding site for a 1,2-diacyl-sn-glycero-3-phospho-(1'-sn-glycerol).

Belongs to the Lgt family.

It localises to the cell inner membrane. It catalyses the reaction L-cysteinyl-[prolipoprotein] + a 1,2-diacyl-sn-glycero-3-phospho-(1'-sn-glycerol) = an S-1,2-diacyl-sn-glyceryl-L-cysteinyl-[prolipoprotein] + sn-glycerol 1-phosphate + H(+). The protein operates within protein modification; lipoprotein biosynthesis (diacylglyceryl transfer). In terms of biological role, catalyzes the transfer of the diacylglyceryl group from phosphatidylglycerol to the sulfhydryl group of the N-terminal cysteine of a prolipoprotein, the first step in the formation of mature lipoproteins. The chain is Phosphatidylglycerol--prolipoprotein diacylglyceryl transferase from Tolumonas auensis (strain DSM 9187 / NBRC 110442 / TA 4).